A 664-amino-acid polypeptide reads, in one-letter code: Macoilin (664 aa).

4 consecutive transmembrane segments (helical) span residues 28-48 (TFLY…DFVV), 75-95 (AFSV…LLFI), 120-140 (VCLP…AIRF), and 154-174 (FAAH…KSYV). A compositionally biased stretch (basic and acidic residues) spans 253 to 265 (REKGKEKDKDAKK). Positions 253–274 (REKGKEKDKDAKKHNLGINNNN) are disordered. The residue at position 305 (Ser305) is a Phosphoserine. The span at 320 to 348 (KNYKNASGVVNSSPRSHSATNGSIPSSSS) shows a compositional bias: polar residues. Positions 320–375 (KNYKNASGVVNSSPRSHSATNGSIPSSSSKNEKKQKCTSKSPSTHKDLMENCIPNN) are disordered. An N-linked (GlcNAc...) asparagine glycan is attached at Asn324. The residue at position 332 (Ser332) is a Phosphoserine. N-linked (GlcNAc...) asparagine glycans are attached at residues Asn340 and Asn452. The disordered stretch occupies residues 630 to 664 (TSPLSPVSPHYSSKFVETSPSGLDPNASVYQPLKK). 2 positions are modified to phosphoserine: Ser631 and Ser634. Asn655 is a glycosylation site (N-linked (GlcNAc...) asparagine).

This sequence belongs to the macoilin family.

It localises to the rough endoplasmic reticulum membrane. Its subcellular location is the nucleus membrane. In terms of biological role, plays a role in the regulation of neuronal activity. The polypeptide is Macoilin (MACO1) (Pan troglodytes (Chimpanzee)).